Consider the following 110-residue polypeptide: Large ribosomal subunit protein uL22 (110 aa).

The protein belongs to the universal ribosomal protein uL22 family. In terms of assembly, part of the 50S ribosomal subunit.

This protein binds specifically to 23S rRNA; its binding is stimulated by other ribosomal proteins, e.g. L4, L17, and L20. It is important during the early stages of 50S assembly. It makes multiple contacts with different domains of the 23S rRNA in the assembled 50S subunit and ribosome. Its function is as follows. The globular domain of the protein is located near the polypeptide exit tunnel on the outside of the subunit, while an extended beta-hairpin is found that lines the wall of the exit tunnel in the center of the 70S ribosome. In Colwellia psychrerythraea (strain 34H / ATCC BAA-681) (Vibrio psychroerythus), this protein is Large ribosomal subunit protein uL22.